A 746-amino-acid chain; its full sequence is NAD(P)H-quinone oxidoreductase subunit 5, chloroplastic (746 aa).

The next 16 membrane-spanning stretches (helical) occupy residues 9–29 (WIIP…LLLF), 40–60 (WTFL…YLSI), 89–109 (IDPL…LVLI), 125–145 (FAYM…SNLI), 147–167 (VYFF…FWFT), 185–205 (GDFG…SFEF), 221–241 (VNLL…IAKS), 258–278 (TPIS…FLVA), 280–300 (LLPI…IGII), 327–347 (LGYM…FHLI), 354–374 (ALLF…VGYS), 396–416 (TAFL…CFWS), 425–445 (FLFS…TAFY), 547–567 (ILFP…IGIP), 608–628 (FSVS…KPFY), and 723–743 (YLFL…FFYF).

The protein belongs to the complex I subunit 5 family. In terms of assembly, NDH is composed of at least 16 different subunits, 5 of which are encoded in the nucleus.

It is found in the plastid. It localises to the chloroplast thylakoid membrane. The catalysed reaction is a plastoquinone + NADH + (n+1) H(+)(in) = a plastoquinol + NAD(+) + n H(+)(out). It carries out the reaction a plastoquinone + NADPH + (n+1) H(+)(in) = a plastoquinol + NADP(+) + n H(+)(out). Functionally, NDH shuttles electrons from NAD(P)H:plastoquinone, via FMN and iron-sulfur (Fe-S) centers, to quinones in the photosynthetic chain and possibly in a chloroplast respiratory chain. The immediate electron acceptor for the enzyme in this species is believed to be plastoquinone. Couples the redox reaction to proton translocation, and thus conserves the redox energy in a proton gradient. This Lobularia maritima (Sweet alyssum) protein is NAD(P)H-quinone oxidoreductase subunit 5, chloroplastic (ndhF).